The sequence spans 301 residues: Probable alpha-L-glutamate ligase (301 aa).

Positions L104–E287 constitute an ATP-grasp domain. Residues K141, E178–Y179, D187, and R211–N213 each bind ATP. The Mg(2+) site is built by D248, E260, and N262. Mn(2+) is bound by residues D248, E260, and N262.

This sequence belongs to the RimK family. The cofactor is Mg(2+). It depends on Mn(2+) as a cofactor.

The chain is Probable alpha-L-glutamate ligase from Ectopseudomonas mendocina (strain ymp) (Pseudomonas mendocina).